Here is a 370-residue protein sequence, read N- to C-terminus: N-acyl-L-amino acid amidohydrolase (370 aa).

It belongs to the peptidase M20 family. Homotetramer. Requires Co(2+) as cofactor.

It carries out the reaction an N-acyl-L-amino acid + H2O = an L-alpha-amino acid + a carboxylate. The enzyme catalyses an N-acetyl-L-cysteine-S-conjugate + H2O = an S-substituted L-cysteine + acetate. Hydrolyzes most efficiently N-acetyl derivatives of aromatic amino acids but is also active on other amino acids. L-stereospecific. In Geobacillus stearothermophilus (Bacillus stearothermophilus), this protein is N-acyl-L-amino acid amidohydrolase (amaA).